We begin with the raw amino-acid sequence, 458 residues long: ATP synthase subunit beta (458 aa).

148 to 155 is a binding site for ATP; it reads GGAGVGKT.

The protein belongs to the ATPase alpha/beta chains family. F-type ATPases have 2 components, CF(1) - the catalytic core - and CF(0) - the membrane proton channel. CF(1) has five subunits: alpha(3), beta(3), gamma(1), delta(1), epsilon(1). CF(0) has three main subunits: a(1), b(2) and c(9-12). The alpha and beta chains form an alternating ring which encloses part of the gamma chain. CF(1) is attached to CF(0) by a central stalk formed by the gamma and epsilon chains, while a peripheral stalk is formed by the delta and b chains.

It localises to the cell inner membrane. The enzyme catalyses ATP + H2O + 4 H(+)(in) = ADP + phosphate + 5 H(+)(out). Its function is as follows. Produces ATP from ADP in the presence of a proton gradient across the membrane. The catalytic sites are hosted primarily by the beta subunits. The chain is ATP synthase subunit beta from Halorhodospira halophila (strain DSM 244 / SL1) (Ectothiorhodospira halophila (strain DSM 244 / SL1)).